Consider the following 291-residue polypeptide: Ribose-phosphate pyrophosphokinase (291 aa).

ATP-binding positions include 34–36 and 93–94; these read DGE and RQ. The Mg(2+) site is built by H127 and D165. K188 is an active-site residue. Residues R190, D216, and 220 to 224 each bind D-ribose 5-phosphate; that span reads STGGT.

It belongs to the ribose-phosphate pyrophosphokinase family. Class III (archaeal) subfamily. Homodimer. Mg(2+) is required as a cofactor.

The protein resides in the cytoplasm. It carries out the reaction D-ribose 5-phosphate + ATP = 5-phospho-alpha-D-ribose 1-diphosphate + AMP + H(+). It participates in metabolic intermediate biosynthesis; 5-phospho-alpha-D-ribose 1-diphosphate biosynthesis; 5-phospho-alpha-D-ribose 1-diphosphate from D-ribose 5-phosphate (route I): step 1/1. In terms of biological role, involved in the biosynthesis of the central metabolite phospho-alpha-D-ribosyl-1-pyrophosphate (PRPP) via the transfer of pyrophosphoryl group from ATP to 1-hydroxyl of ribose-5-phosphate (Rib-5-P). This Saccharolobus solfataricus (strain ATCC 35092 / DSM 1617 / JCM 11322 / P2) (Sulfolobus solfataricus) protein is Ribose-phosphate pyrophosphokinase.